Reading from the N-terminus, the 629-residue chain is Chaperone protein DnaK (629 aa).

Threonine 195 is subject to Phosphothreonine; by autocatalysis. Disordered stretches follow at residues 514–533 (EAEQNAEADRKRRERVEKRN) and 543–629 (LGQL…KPAE). Residues 555 to 590 (DAKDRLKAAADEAEEAVRSDDDSRIERAQKQLEEAM) show a composition bias toward basic and acidic residues. The segment covering 595–614 (TAAQSGSQNQAGQGAQTQTG) has biased composition (low complexity). Positions 615–629 (RQEDDVIDADFKPAE) are enriched in basic and acidic residues.

The protein belongs to the heat shock protein 70 family.

Acts as a chaperone. In Deinococcus geothermalis (strain DSM 11300 / CIP 105573 / AG-3a), this protein is Chaperone protein DnaK.